The chain runs to 430 residues: Adenylosuccinate synthetase (430 aa).

Residues 12–18 (GDEGKGK) and 40–42 (GHT) each bind GTP. Residue aspartate 13 is the Proton acceptor of the active site. Mg(2+) is bound by residues aspartate 13 and glycine 40. Residues 13–16 (DEGK), 38–41 (NAGH), threonine 128, arginine 142, glutamine 223, threonine 238, and arginine 302 each bind IMP. Histidine 41 serves as the catalytic Proton donor. 298–304 (TTTGRPR) is a substrate binding site. Residues arginine 304, 330–332 (SID), and 413–415 (SVG) each bind GTP.

The protein belongs to the adenylosuccinate synthetase family. In terms of assembly, homodimer. Mg(2+) serves as cofactor.

The protein localises to the cytoplasm. It carries out the reaction IMP + L-aspartate + GTP = N(6)-(1,2-dicarboxyethyl)-AMP + GDP + phosphate + 2 H(+). It participates in purine metabolism; AMP biosynthesis via de novo pathway; AMP from IMP: step 1/2. In terms of biological role, plays an important role in the de novo pathway of purine nucleotide biosynthesis. Catalyzes the first committed step in the biosynthesis of AMP from IMP. This Lactococcus lactis subsp. cremoris (strain SK11) protein is Adenylosuccinate synthetase.